Consider the following 271-residue polypeptide: Formamidopyrimidine-DNA glycosylase (271 aa).

Proline 2 (schiff-base intermediate with DNA) is an active-site residue. Glutamate 3 (proton donor) is an active-site residue. The Proton donor; for beta-elimination activity role is filled by lysine 56. Histidine 89, arginine 107, and arginine 151 together coordinate DNA. The segment at 236 to 270 adopts an FPG-type zinc-finger fold; that stretch reads MVYARQGQPCRVCATPIKSLRQGQRSTFYCPHCQK. Arginine 260 (proton donor; for delta-elimination activity) is an active-site residue.

This sequence belongs to the FPG family. Monomer. Requires Zn(2+) as cofactor.

It catalyses the reaction Hydrolysis of DNA containing ring-opened 7-methylguanine residues, releasing 2,6-diamino-4-hydroxy-5-(N-methyl)formamidopyrimidine.. The catalysed reaction is 2'-deoxyribonucleotide-(2'-deoxyribose 5'-phosphate)-2'-deoxyribonucleotide-DNA = a 3'-end 2'-deoxyribonucleotide-(2,3-dehydro-2,3-deoxyribose 5'-phosphate)-DNA + a 5'-end 5'-phospho-2'-deoxyribonucleoside-DNA + H(+). Involved in base excision repair of DNA damaged by oxidation or by mutagenic agents. Acts as a DNA glycosylase that recognizes and removes damaged bases. Has a preference for oxidized purines, such as 7,8-dihydro-8-oxoguanine (8-oxoG). Has AP (apurinic/apyrimidinic) lyase activity and introduces nicks in the DNA strand. Cleaves the DNA backbone by beta-delta elimination to generate a single-strand break at the site of the removed base with both 3'- and 5'-phosphates. The protein is Formamidopyrimidine-DNA glycosylase of Albidiferax ferrireducens (strain ATCC BAA-621 / DSM 15236 / T118) (Rhodoferax ferrireducens).